The following is a 455-amino-acid chain: 3-phosphoshikimate 1-carboxyvinyltransferase (455 aa).

The span at 1–19 (MSHGASSRPATARKSSGLS) shows a compositional bias: polar residues. The interval 1–25 (MSHGASSRPATARKSSGLSGTVRIP) is disordered. A phosphoenolpyruvate-binding site is contributed by Lys-28. 2 residues coordinate 3-phosphoshikimate: Ser-29 and Arg-33. Arg-128 contacts phosphoenolpyruvate. Residues Ser-173, Ala-174, Gln-175, Asp-326, and Lys-353 each coordinate 3-phosphoshikimate. Gln-175 contributes to the phosphoenolpyruvate binding site. The active-site Proton acceptor is Asp-326. 2 residues coordinate phosphoenolpyruvate: Arg-357 and Arg-405.

This sequence belongs to the EPSP synthase family. Monomer.

The protein resides in the cytoplasm. It catalyses the reaction 3-phosphoshikimate + phosphoenolpyruvate = 5-O-(1-carboxyvinyl)-3-phosphoshikimate + phosphate. The protein operates within metabolic intermediate biosynthesis; chorismate biosynthesis; chorismate from D-erythrose 4-phosphate and phosphoenolpyruvate: step 6/7. Its activity is regulated as follows. Is resistant to inhibition by glyphosate (glyphosate-tolerant) like other members of class II EPSPS, in contrast to class I EPSPS, which is glyphosate-sensitive. Is much less sensitive to inhibition by the (R)-difluoromethyl and (R)-phosphonate analogs of the tetrahedral reaction intermediate than the representative class I EPSPS from E.coli. Is highly activated in the presence of cations, such as NH4(+), Rb(+), and K(+). Functionally, catalyzes the transfer of the enolpyruvyl moiety of phosphoenolpyruvate (PEP) to the 5-hydroxyl of shikimate-3-phosphate (S3P) to produce enolpyruvyl shikimate-3-phosphate and inorganic phosphate. This Agrobacterium sp. (strain CP4) protein is 3-phosphoshikimate 1-carboxyvinyltransferase.